Reading from the N-terminus, the 883-residue chain is Integrator complex subunit 6-A (883 aa).

In terms of domain architecture, VWFA spans 3–227 (ILLFLLDTSA…QCLESLVQKV (225 aa)). Positions 626–633 (MMIDEADE) match the Inhibitory loop motif.

This sequence belongs to the Integrator subunit 6 family. As to quaternary structure, component of the Integrator complex, composed of core subunits INTS1, INTS2, INTS3, INTS4, INTS5, INTS6, INTS7, INTS8, INTS9/RC74, INTS10, INTS11/CPSF3L, INTS12, INTS13, INTS14 and INTS15. The core complex associates with protein phosphatase 2A subunits PPP2CA and PPP2R1A, to form the Integrator-PP2A (INTAC) complex.

The protein localises to the nucleus. It localises to the chromosome. In terms of biological role, component of the integrator complex, a multiprotein complex that terminates RNA polymerase II (Pol II) transcription in the promoter-proximal region of genes. The integrator complex provides a quality checkpoint during transcription elongation by driving premature transcription termination of transcripts that are unfavorably configured for transcriptional elongation: the complex terminates transcription by (1) catalyzing dephosphorylation of the C-terminal domain (CTD) of Pol II subunit POLR2A/RPB1 and SUPT5H/SPT5, (2) degrading the exiting nascent RNA transcript via endonuclease activity and (3) promoting the release of Pol II from bound DNA. The integrator complex is also involved in terminating the synthesis of non-coding Pol II transcripts, such as enhancer RNAs (eRNAs), small nuclear RNAs (snRNAs), telomerase RNAs and long non-coding RNAs (lncRNAs). Within the integrator complex, INTS6 acts as a molecular adapter that promotes assembly of protein phosphatase 2A (PP2A) subunits to the integrator core complex, promoting recruitment of PP2A to transcription pause-release checkpoint. This is Integrator complex subunit 6-A (ints6-a) from Xenopus laevis (African clawed frog).